A 1399-amino-acid chain; its full sequence is DNA-directed RNA polymerase subunit beta' (1399 aa).

Zn(2+) is bound by residues Cys-71, Cys-73, Cys-86, and Cys-89. Residues Asp-462, Asp-464, and Asp-466 each contribute to the Mg(2+) site. Zn(2+) is bound by residues Cys-810, Cys-884, Cys-891, and Cys-894. Positions 1379-1399 are disordered; it reads KQAAIVPSQPEPQPLALPPAE. Residues 1387–1399 show a composition bias toward pro residues; the sequence is QPEPQPLALPPAE.

It belongs to the RNA polymerase beta' chain family. The RNAP catalytic core consists of 2 alpha, 1 beta, 1 beta' and 1 omega subunit. When a sigma factor is associated with the core the holoenzyme is formed, which can initiate transcription. The cofactor is Mg(2+). Requires Zn(2+) as cofactor.

The catalysed reaction is RNA(n) + a ribonucleoside 5'-triphosphate = RNA(n+1) + diphosphate. DNA-dependent RNA polymerase catalyzes the transcription of DNA into RNA using the four ribonucleoside triphosphates as substrates. This Bradyrhizobium sp. (strain ORS 278) protein is DNA-directed RNA polymerase subunit beta'.